A 131-amino-acid polypeptide reads, in one-letter code: Protein FAM107B (131 aa).

Alanine 2 carries the post-translational modification N-acetylalanine. The segment at 39 to 79 (MNQKRGLAPQNKPELQKVMEKRRRDQVIKQKEEEAQKKKSD) is disordered. Lysine 50 carries the post-translational modification N6-acetyllysine. The segment covering 52-79 (ELQKVMEKRRRDQVIKQKEEEAQKKKSD) has biased composition (basic and acidic residues). Residues 61-112 (RRDQVIKQKEEEAQKKKSDLEIELLKRQQKLEQLELEKQKLQEEQENAPEFV) are a coiled coil.

It belongs to the FAM107 family. In terms of tissue distribution, expressed in the hippocampus and hypothalamus. Expressed in the pontine nuclei and reticulotegmental nucleus. Expressed in Purkinje cell and nuclear layers of the cerebelum. Expressed in the choroid plexus. Expressed in hippocampal granule neurons of the dente gyrus.

This Mus musculus (Mouse) protein is Protein FAM107B.